A 161-amino-acid polypeptide reads, in one-letter code: Nucleotide-binding protein PputGB1_4497 (161 aa).

This sequence belongs to the YajQ family.

Its function is as follows. Nucleotide-binding protein. This chain is Nucleotide-binding protein PputGB1_4497, found in Pseudomonas putida (strain GB-1).